A 673-amino-acid chain; its full sequence is Zinc finger and BTB domain-containing protein 16 (673 aa).

Residues 34-96 (CDVVIMVDSQ…AYTATLQAKA (63 aa)) enclose the BTB domain. A phosphoserine; by PDPK1 mark is found at serine 76, serine 184, and serine 197. The segment at 200–300 (KAAVDSLMTI…SARELHYGRE (101 aa)) is interaction with RUNX1T1. 2 disordered regions span residues 215 to 236 (QGTLQPPAGPEEPTLAGGGRHP) and 249 to 332 (DEVP…KHLG). Serine 256 bears the Phosphoserine; by PDPK1 mark. A Phosphothreonine; by PDPK1 modification is found at threonine 282. 2 stretches are compositionally biased toward basic and acidic residues: residues 293 to 302 (RELHYGREES) and 319 to 331 (RPEHPAPPPEKHL). 8 C2H2-type zinc fingers span residues 404-426 (EQCSVCGVELPDNEAVEQHRKLH), 432-454 (YGCELCGKRFLDSLRLRMHLLAH), 461-483 (FVCDQCGAQFSKEDALETHRQTH), 490-512 (VFCLLCGKRFQAQSALQQHMEVH), 518-540 (YICSECNRTFPSHTALKRHLRSH), 546-568 (YECEFCGSCFRDESTLKSHKRIH), 574-596 (YECNGCGKKFSLKHQLETHYRVH), and 602-624 (FECKLCHQRSRDYSAMIKHLRTH). At serine 628 the chain carries Phosphoserine; by PDPK1. The C2H2-type 9 zinc finger occupies 630–652 (YQCTICTEYCPSLSSMQKHMKGH).

This sequence belongs to the krueppel C2H2-type zinc-finger protein family. As to quaternary structure, binds EPN1. Interacts with ZBTB32 and CUL3. Interacts with ATP7B. Interacts with transcriptional corepressor RUNX1T1 (via its N-terminus); the interaction increases the transcription repression activity of ZBTB16. Interacts (via C2H2-type zinc finger domains 1 and 2) with RNF112. Within the hematopoietic system, PLZF is expressed in bone marrow, early myeloid cell lines and peripheral blood mononuclear cells. Also expressed in the ovary, and at lower levels, in the kidney and lung.

Its subcellular location is the nucleus. The protein localises to the nuclear body. It functions in the pathway protein modification; protein ubiquitination. In terms of biological role, acts as a transcriptional repressor. Transcriptional repression may be mediated through recruitment of histone deacetylases to target promoters. May play a role in myeloid maturation and in the development and/or maintenance of other differentiated tissues. Probable substrate-recognition component of an E3 ubiquitin-protein ligase complex which mediates the ubiquitination and subsequent proteasomal degradation of target proteins. The chain is Zinc finger and BTB domain-containing protein 16 (ZBTB16) from Homo sapiens (Human).